The sequence spans 438 residues: Aspartate--tRNA(Asp) ligase (438 aa).

Glutamate 170 lines the L-aspartate pocket. The interval glutamine 192 to lysine 195 is aspartate. Arginine 214 is a binding site for L-aspartate. ATP is bound by residues arginine 214–glutamate 216, arginine 222–leucine 224, and glutamate 361. Mg(2+) is bound by residues glutamate 361 and serine 364. Residues serine 364 and arginine 368 each coordinate L-aspartate. Residue glycine 409–arginine 412 participates in ATP binding.

Belongs to the class-II aminoacyl-tRNA synthetase family. Type 2 subfamily. Homodimer. It depends on Mg(2+) as a cofactor.

The protein localises to the cytoplasm. The catalysed reaction is tRNA(Asp) + L-aspartate + ATP = L-aspartyl-tRNA(Asp) + AMP + diphosphate. Catalyzes the attachment of L-aspartate to tRNA(Asp) in a two-step reaction: L-aspartate is first activated by ATP to form Asp-AMP and then transferred to the acceptor end of tRNA(Asp). This Pyrococcus abyssi (strain GE5 / Orsay) protein is Aspartate--tRNA(Asp) ligase.